A 94-amino-acid chain; its full sequence is Putative regulatory protein Sfum_3631 (94 aa).

This sequence belongs to the RemA family.

This Syntrophobacter fumaroxidans (strain DSM 10017 / MPOB) protein is Putative regulatory protein Sfum_3631.